A 404-amino-acid chain; its full sequence is Odorant receptor 67c (404 aa).

Over 1 to 45 the chain is Cytoplasmic; sequence METAKDNTARTFMELMRVPVQFYRTIGEDIYAHRSTNPLKSLLFK. The helical transmembrane segment at 46 to 66 threads the bilayer; that stretch reads IYLYAGFINFNLLVIGELVFF. Residues 67–79 lie on the Extracellular side of the membrane; that stretch reads YNSIQDFETIRLA. Residues 80 to 100 traverse the membrane as a helical segment; sequence IAVAPCIGFSLVADFKQAAMI. Residues 101–139 are Cytoplasmic-facing; it reads RGKKTLIMLLDDLENMHPKTLAKQMEYKLPDFEKTMKRV. Residues 140 to 160 traverse the membrane as a helical segment; sequence INIFTFLCLAYTTTFSFYPAI. Residues 161-204 are Extracellular-facing; the sequence is KASVKFNFLGYDTFDRNFGFLIWFPFDATRNNLIYWIMYWDIAH. A helical transmembrane segment spans residues 205–225; it reads GAYLAGIAFLCADLLLVVVIT. Residues 226–277 lie on the Cytoplasmic side of the membrane; the sequence is QICMHFNYISMRLEDHPCNSNEDKENIEFLIGIIRYHDKCLKLCEHVNDLYS. The helical transmembrane segment at 278 to 298 threads the bilayer; the sequence is FSLLLNFLMASMQICFIAFQV. The Extracellular segment spans residues 299–304; that stretch reads TESTVE. A helical transmembrane segment spans residues 305-326; the sequence is VIIIYCIFLMTSMVQVFMVCYY. Over 327 to 373 the chain is Cytoplasmic; that stretch reads GDTLIAASLKVGDAAYNQKWFQCSKSYCTMLKLLIMRSQKPASIRPP. The helical transmembrane segment at 374–394 threads the bilayer; the sequence is TFPPISLVTYMKVISMSYQFF. The Extracellular portion of the chain corresponds to 395 to 404; that stretch reads ALLRTTYSNN.

The protein belongs to the insect chemoreceptor superfamily. Heteromeric odorant receptor channel (TC 1.A.69) family. Or49a subfamily. In terms of assembly, interacts with Orco. Complexes exist early in the endomembrane system in olfactory sensory neurons (OSNs), coupling these complexes to the conserved ciliary trafficking pathway. In terms of tissue distribution, expressed in olfactory sensory neurons in the antenna.

It is found in the cell membrane. In terms of biological role, odorant receptor which mediates acceptance or avoidance behavior, depending on its substrates. The odorant receptor repertoire encodes a large collection of odor stimuli that vary widely in identity, intensity, and duration. May form a complex with Orco to form odorant-sensing units, providing sensitive and prolonged odorant signaling and calcium permeability. This Drosophila melanogaster (Fruit fly) protein is Odorant receptor 67c (Or67c).